Reading from the N-terminus, the 151-residue chain is UPF0208 membrane protein PC1_2779 (151 aa).

A run of 2 helical transmembrane segments spans residues 46 to 66 (FGIRIMPPLAVFTLTWQIALG) and 69 to 89 (LGPAIATALFACSLPLQGLWW).

The protein belongs to the UPF0208 family.

Its subcellular location is the cell inner membrane. The polypeptide is UPF0208 membrane protein PC1_2779 (Pectobacterium carotovorum subsp. carotovorum (strain PC1)).